Reading from the N-terminus, the 301-residue chain is Acetylglutamate kinase (301 aa).

Residues Gly68 to Gly69, Arg90, and Asn195 each bind substrate.

The protein belongs to the acetylglutamate kinase family. ArgB subfamily.

It localises to the cytoplasm. It catalyses the reaction N-acetyl-L-glutamate + ATP = N-acetyl-L-glutamyl 5-phosphate + ADP. Its pathway is amino-acid biosynthesis; L-arginine biosynthesis; N(2)-acetyl-L-ornithine from L-glutamate: step 2/4. Catalyzes the ATP-dependent phosphorylation of N-acetyl-L-glutamate. The polypeptide is Acetylglutamate kinase (Pseudomonas fluorescens (strain Pf0-1)).